Here is a 117-residue protein sequence, read N- to C-terminus: Ribosome-binding factor A (117 aa).

This sequence belongs to the RbfA family. As to quaternary structure, monomer. Binds 30S ribosomal subunits, but not 50S ribosomal subunits or 70S ribosomes.

The protein localises to the cytoplasm. Its function is as follows. One of several proteins that assist in the late maturation steps of the functional core of the 30S ribosomal subunit. Associates with free 30S ribosomal subunits (but not with 30S subunits that are part of 70S ribosomes or polysomes). Required for efficient processing of 16S rRNA. May interact with the 5'-terminal helix region of 16S rRNA. This Anaplasma marginale (strain St. Maries) protein is Ribosome-binding factor A.